Consider the following 305-residue polypeptide: Cyclin-dependent kinase 3 (305 aa).

Residues F4–F286 enclose the Protein kinase domain. ATP-binding positions include I10–V18 and K33. The active-site Proton acceptor is D127.

The protein belongs to the protein kinase superfamily. CMGC Ser/Thr protein kinase family. CDC2/CDKX subfamily. As to quaternary structure, interacts with CABLES1 and CABLES2. Interacts with ATF1. Binding to CCNC/cyclin-C promotes RB1 phosphorylation. In terms of tissue distribution, expressed in cancer cell lines and glioblastoma tissue.

The catalysed reaction is L-seryl-[protein] + ATP = O-phospho-L-seryl-[protein] + ADP + H(+). It carries out the reaction L-threonyl-[protein] + ATP = O-phospho-L-threonyl-[protein] + ADP + H(+). Functionally, serine/threonine-protein kinase that plays a critical role in the control of the eukaryotic cell cycle; involved in G0-G1 and G1-S cell cycle transitions. Interacts with CCNC/cyclin-C during interphase. Phosphorylates histone H1, ATF1, RB1 and CABLES1. ATF1 phosphorylation triggers ATF1 transactivation and transcriptional activities, and promotes cell proliferation and transformation. CDK3/cyclin-C mediated RB1 phosphorylation is required for G0-G1 transition. Promotes G1-S transition probably by contributing to the activation of E2F1, E2F2 and E2F3 in a RB1-independent manner. The polypeptide is Cyclin-dependent kinase 3 (CDK3) (Homo sapiens (Human)).